Here is a 427-residue protein sequence, read N- to C-terminus: N-formyl-4-amino-5-aminomethyl-2-methylpyrimidine deformylase (427 aa).

A Zn(2+)-binding site is contributed by His-91. Asp-93 is an active-site residue. Asp-124 provides a ligand contact to Zn(2+). The active-site Proton acceptor is Glu-158. Residues Glu-159, Asp-182, and His-396 each coordinate Zn(2+).

This sequence belongs to the peptidase M20A family. The cofactor is Zn(2+). Co(2+) serves as cofactor.

It carries out the reaction N-formyl-4-amino-5-aminomethyl-2-methylpyrimidine + H2O = 4-amino-5-aminomethyl-2-methylpyrimidine + formate. Its pathway is cofactor biosynthesis; thiamine diphosphate biosynthesis. Catalyzes the deformylation of the formylaminopyrimidine N-formyl-4-amino-5-aminomethyl-2-methylpyrimidine (FAMP) to give the corresponding aminopyrimidine. The protein is N-formyl-4-amino-5-aminomethyl-2-methylpyrimidine deformylase of Halalkalibacterium halodurans (strain ATCC BAA-125 / DSM 18197 / FERM 7344 / JCM 9153 / C-125) (Bacillus halodurans).